Reading from the N-terminus, the 169-residue chain is Protein FAM106A (169 aa).

It belongs to the FAM106 family.

The polypeptide is Protein FAM106A (FAM106A) (Homo sapiens (Human)).